Here is a 505-residue protein sequence, read N- to C-terminus: Deoxyguanosinetriphosphate triphosphohydrolase (505 aa).

An HD domain is found at 66 to 273 (RLTHSMEVQQ…MEAADDISYC (208 aa)).

This sequence belongs to the dGTPase family. Type 1 subfamily. Homotetramer. It depends on Mg(2+) as a cofactor.

It catalyses the reaction dGTP + H2O = 2'-deoxyguanosine + triphosphate + H(+). In terms of biological role, dGTPase preferentially hydrolyzes dGTP over the other canonical NTPs. This chain is Deoxyguanosinetriphosphate triphosphohydrolase, found in Salmonella schwarzengrund (strain CVM19633).